The following is a 359-amino-acid chain: MEFDKQFFSSVEKIVELAEQLEKDLNKPDLTFEQIKAINKELKHKQPLVVKFKEFKRLIDQALEAEAILENNELKELHDEAKKELERVRSVVPEYEEALKLLLLPIDENNQKNVIVELRPAAGGDESCIFLADLFNMYRNFCSNKGWKLQINEMIPSSVGLNFVSFEVNGVDVFAKLKFESGVHRVQRVPATESKGRVHTSTVTVAVLPQLEAVEVHINPADLRVDTYRASGAGGQHVNRTESAVRITHLPTGIVVSCQEGKSQFTNRDTAMKMLRAKLWEKAQNEQLSTQAGLRKSQVGSGDRAEKIRTYNYPQNRVTDHRIKLTVNKLNTIILGDLDEIIEALQADEKKQQLENFFS.

Q236 carries the N5-methylglutamine modification.

This sequence belongs to the prokaryotic/mitochondrial release factor family. Methylated by PrmC. Methylation increases the termination efficiency of RF1.

It is found in the cytoplasm. Its function is as follows. Peptide chain release factor 1 directs the termination of translation in response to the peptide chain termination codons UAG and UAA. This chain is Peptide chain release factor 1 (prfA), found in Mycoplasma pneumoniae (strain ATCC 29342 / M129 / Subtype 1) (Mycoplasmoides pneumoniae).